A 240-amino-acid chain; its full sequence is Molybdate/tungstate import ATP-binding protein WtpC (240 aa).

The ABC transporter domain occupies 2–227; that stretch reads FLKVRAEKRL…KNGEVAEFLS (226 aa). 31–38 contributes to the ATP binding site; it reads GPTGAGKS.

Belongs to the ABC transporter superfamily. Sulfate/tungstate importer (TC 3.A.1.6) family. The complex is composed of two ATP-binding proteins (WtpC), two transmembrane proteins (WtpB) and a solute-binding protein (WtpA).

The protein localises to the cell membrane. It carries out the reaction tungstate(in) + ATP + H2O = tungstate(out) + ADP + phosphate + H(+). Functionally, part of the ABC transporter complex WtpABC involved in molybdate/tungstate import. Responsible for energy coupling to the transport system. This Archaeoglobus fulgidus (strain ATCC 49558 / DSM 4304 / JCM 9628 / NBRC 100126 / VC-16) protein is Molybdate/tungstate import ATP-binding protein WtpC (wtpC).